The chain runs to 357 residues: 5-hydroxytryptamine receptor 5A (357 aa).

The Extracellular segment spans residues 1–36; it reads MDLPVNLTSFSLSTPSPLETNHSLGKDDLRPSSPLL. 2 N-linked (GlcNAc...) asparagine glycosylation sites follow: Asn6 and Asn21. Residues 37 to 63 traverse the membrane as a helical segment; the sequence is SVFGVLILTLLGFLVAATFAWNLLVLA. Topologically, residues 64-76 are cytoplasmic; it reads TILRVRTFHRVPH. The chain crosses the membrane as a helical span at residues 77–103; that stretch reads NLVASMAVSDVLVAALVMPLSLVHELS. At 104–114 the chain is on the extracellular side; sequence GRRWQLGRRLC. A disulfide bridge links Cys114 with Cys192. A helical transmembrane segment spans residues 115 to 137; the sequence is QLWIACDVLCCTASIWNVTAIAL. Position 121 (Asp121) interacts with serotonin. Topologically, residues 138–155 are cytoplasmic; the sequence is DRYWSITRHMEYTLRTRK. Residues 156–176 form a helical membrane-spanning segment; that stretch reads CVSNVMIALTWALSAVISLAP. Residues 177–198 are Extracellular-facing; that stretch reads LLFGWGETYSEGSEECQVSREP. Residues 199-220 traverse the membrane as a helical segment; sequence SYAVFSTVGAFYLPLCVVLFVY. Topologically, residues 221-287 are cytoplasmic; it reads WKIYKAAKFR…QKEQRAALMV (67 aa). Residues 288 to 312 form a helical membrane-spanning segment; that stretch reads GILIGVFVLCWIPFFLTELISPLCS. Residues 313 to 314 lie on the Extracellular side of the membrane; sequence CD. A helical transmembrane segment spans residues 315–339; that stretch reads IPAIWKSIFLWLGYSNSFFNPLIYT. Residues 340–357 are Cytoplasmic-facing; the sequence is AFNKNYNSAFKNFFSRQH.

Belongs to the G-protein coupled receptor 1 family.

The protein localises to the cell membrane. In terms of biological role, G-protein coupled receptor for 5-hydroxytryptamine (serotonin), a biogenic hormone that functions as a neurotransmitter, a hormone and a mitogen. Also functions as a receptor for ergot alkaloid derivatives and other psychoactive substances. Ligand binding causes a conformation change that triggers signaling via guanine nucleotide-binding proteins (G proteins) and modulates the activity of downstream effectors. HTR5A is coupled to G(i)/G(o) G alpha proteins and mediates inhibitory neurotransmission: signaling inhibits adenylate cyclase activity and activates a phosphatidylinositol-calcium second messenger system that regulates the release of Ca(2+) ions from intracellular stores. This chain is 5-hydroxytryptamine receptor 5A, found in Homo sapiens (Human).